A 241-amino-acid polypeptide reads, in one-letter code: MKLAFLCILSTLLRTFAYNPDHIAGTTPPYLVYLKSDYLPCTGVLIHPLWVITAAHCNLPNLQVILGITNPADPMERDVEVSDYEKIFHHPNFLVSSISHDLLLIKLKRRIKHSNYAKAVKLPQHIVSVNAMCSVSTWAYNLCDVTKDPDSLQTVNVTVISKAECRNAYKAFDITENMICVGIVPGRRLPCKEVTAAPAVCNGVLYGILSYADGCVLRADVGIYASIFHYLPWIEDTMKNN.

The N-terminal stretch at 1–17 (MKLAFLCILSTLLRTFA) is a signal peptide. Positions 18-239 (YNPDHIAGTT…YLPWIEDTMK (222 aa)) constitute a Peptidase S1 domain. Cysteines 41 and 57 form a disulfide. Catalysis depends on charge relay system residues histidine 56 and aspartate 101. 3 disulfide bridges follow: cysteine 133–cysteine 201, cysteine 165–cysteine 180, and cysteine 191–cysteine 215. The N-linked (GlcNAc...) asparagine glycan is linked to asparagine 156.

This sequence belongs to the peptidase S1 family.

It is found in the secreted. The catalysed reaction is Preferential cleavage: Arg-|-Xaa, Lys-|-Xaa.. The polypeptide is Putative inactive serine protease 58 (Prss58) (Mus musculus (Mouse)).